A 520-amino-acid polypeptide reads, in one-letter code: MTLREEVEIRKTFAIISHPDAGKTTLTEKLLLFGGAIREAGTVKGKKTGKFATSDWMEVEKQRGISVTSSVMQFDYDNFKINILDTPGHEDFSEDTYRTLMAVDSAVMVIDCAKGIEPQTLKLFKVCKMRGIPIFTFINKLDRVGKEPFELLEEIEKTLEIETYPMNWPIGMGQSFFGIIDRKTKTIEPFRDEENVLHLNEDYELQESHAITSDSAYEQAIEELMLVDEAGETFDKEKLMTGDLTPVFFGSALANFGVQNFLNAYVDHAPMPSGRKTESGEEISPFDESFSGFIFKIQANMNPQHRDRIAFMRIVSGAFERGMDIKMTRTDKKMKISRSTSFMADDTQTVNHAVSGDIIGLYDSGNFQIGDTLVGGNQKFQFEKLPQFTPEIFMKVSPKNVMKQKHFHKGIEQLVQEGAIQLYRTLHTNQIILGAVGQLQFEVFEHRMNNEYNVDVIMEPVGRKIARWIENEADIRDAMNSSRSILVEDRFENKVFLFENEFATRWFLDKFPEIKLYSLL.

A tr-type G domain is found at 8–273 (EIRKTFAIIS…AYVDHAPMPS (266 aa)). GTP is bound by residues 17–24 (SHPDAGKT), 85–89 (DTPGH), and 139–142 (NKLD).

It belongs to the TRAFAC class translation factor GTPase superfamily. Classic translation factor GTPase family. PrfC subfamily.

It is found in the cytoplasm. Functionally, increases the formation of ribosomal termination complexes and stimulates activities of RF-1 and RF-2. It binds guanine nucleotides and has strong preference for UGA stop codons. It may interact directly with the ribosome. The stimulation of RF-1 and RF-2 is significantly reduced by GTP and GDP, but not by GMP. This chain is Peptide chain release factor 3, found in Macrococcus caseolyticus (strain JCSC5402) (Macrococcoides caseolyticum).